Consider the following 40-residue polypeptide: Fibrinolytic protease (40 aa).

Residues Ile1 to Pro40 form the Peptidase S1 domain.

The protein belongs to the peptidase S1 family.

It localises to the secreted. The protein resides in the extracellular space. Serine protease with fibrinolytic activity. This chain is Fibrinolytic protease, found in Euphausia superba (Antarctic krill).